The sequence spans 265 residues: Glutamate racemase (265 aa).

Substrate is bound by residues 9 to 10 and 41 to 42; these read DS and YS. The active-site Proton donor/acceptor is the Cys73. Substrate is bound at residue 74–75; it reads NT. Catalysis depends on Cys184, which acts as the Proton donor/acceptor. 185–186 serves as a coordination point for substrate; the sequence is TH.

It belongs to the aspartate/glutamate racemases family.

The enzyme catalyses L-glutamate = D-glutamate. It functions in the pathway cell wall biogenesis; peptidoglycan biosynthesis. In terms of biological role, provides the (R)-glutamate required for cell wall biosynthesis. This Haemophilus ducreyi (strain 35000HP / ATCC 700724) protein is Glutamate racemase.